Reading from the N-terminus, the 101-residue chain is Small ribosomal subunit protein uS14 (101 aa).

The protein belongs to the universal ribosomal protein uS14 family. As to quaternary structure, part of the 30S ribosomal subunit. Contacts proteins S3 and S10.

In terms of biological role, binds 16S rRNA, required for the assembly of 30S particles and may also be responsible for determining the conformation of the 16S rRNA at the A site. The sequence is that of Small ribosomal subunit protein uS14 from Cellvibrio japonicus (strain Ueda107) (Pseudomonas fluorescens subsp. cellulosa).